The following is a 246-amino-acid chain: Enolase-phosphatase E1 (246 aa).

Positions 15 and 17 each coordinate Mg(2+). Substrate-binding positions include 134 to 135 (SS) and Lys-174. Asp-201 provides a ligand contact to Mg(2+).

The protein belongs to the HAD-like hydrolase superfamily. MasA/MtnC family. As to quaternary structure, monomer. Requires Mg(2+) as cofactor.

The protein localises to the cytoplasm. Its subcellular location is the nucleus. The catalysed reaction is 5-methylsulfanyl-2,3-dioxopentyl phosphate + H2O = 1,2-dihydroxy-5-(methylsulfanyl)pent-1-en-3-one + phosphate. It participates in amino-acid biosynthesis; L-methionine biosynthesis via salvage pathway; L-methionine from S-methyl-5-thio-alpha-D-ribose 1-phosphate: step 3/6. It functions in the pathway amino-acid biosynthesis; L-methionine biosynthesis via salvage pathway; L-methionine from S-methyl-5-thio-alpha-D-ribose 1-phosphate: step 4/6. Its function is as follows. Bifunctional enzyme that catalyzes the enolization of 2,3-diketo-5-methylthiopentyl-1-phosphate (DK-MTP-1-P) into the intermediate 2-hydroxy-3-keto-5-methylthiopentenyl-1-phosphate (HK-MTPenyl-1-P), which is then dephosphorylated to form the acireductone 1,2-dihydroxy-3-keto-5-methylthiopentene (DHK-MTPene). This chain is Enolase-phosphatase E1, found in Debaryomyces hansenii (strain ATCC 36239 / CBS 767 / BCRC 21394 / JCM 1990 / NBRC 0083 / IGC 2968) (Yeast).